A 351-amino-acid polypeptide reads, in one-letter code: Outer membrane porin PhoE (351 aa).

A signal peptide spans 1–21 (MKKSTLALVVMGITASASVQA).

This sequence belongs to the Gram-negative porin family. In terms of assembly, homotrimer.

The protein resides in the cell outer membrane. Uptake of inorganic phosphate, phosphorylated compounds, and some other negatively charged solutes. The protein is Outer membrane porin PhoE (phoE) of Citrobacter freundii.